The sequence spans 447 residues: Serine/threonine-protein phosphatase 2A 55 kDa regulatory subunit B delta isoform (447 aa).

WD repeat units follow at residues alanine 26–proline 65, glutamate 91–glutamate 132, alanine 175–asparagine 213, glutamate 224–arginine 264, glutamate 283–glutamate 321, glutamate 338–leucine 379, and aspartate 414–asparagine 447.

It belongs to the phosphatase 2A regulatory subunit B family. In terms of assembly, PP2A consists of a common heterodimeric core enzyme, composed of a 36 kDa catalytic subunit (subunit C) and a 65 kDa constant regulatory subunit (PR65 or subunit A), that associates with a variety of regulatory subunits. Proteins that associate with the core dimer include three families of regulatory subunits B (the R2/B/PR55/B55, R3/B''/PR72/PR130/PR59 and R5/B'/B56 families), the 48 kDa variable regulatory subunit, viral proteins, and cell signaling molecules. Interacts with ensa (when phosphorylated at 'Ser-67') and arpp19 (when phosphorylated at 'Ser-67'), leading to inhibit PP2A activity.

The protein localises to the cytoplasm. Substrate-recognition subunit of protein phosphatase 2A (PP2A) that plays a key role in cell cycle by controlling mitosis entry and exit. The activity of PP2A complexes containing ppp2r2d (PR55-delta) fluctuate during the cell cycle: the activity is high in interphase and low in mitosis. During mitosis, activity of PP2A is inhibited via interaction with phosphorylated ensa and arpp19 inhibitors. PP2A complexes containing ppp2r2d (PR55-delta) also regulate the activity of TGF-beta/Activin/Nodal signaling by restricting receptor activity. Within the PP2A complexes, the B regulatory subunits modulate substrate selectivity and catalytic activity, and may also direct the localization of the catalytic enzyme to a particular subcellular compartment. The polypeptide is Serine/threonine-protein phosphatase 2A 55 kDa regulatory subunit B delta isoform (ppp2r2d) (Xenopus tropicalis (Western clawed frog)).